A 343-amino-acid polypeptide reads, in one-letter code: Hydroxycarboxylic acid receptor 1 (343 aa).

Over 1-21 (MDNGSCCLIEGEPISQVMPPL) the chain is Extracellular. Asn3 is a glycosylation site (N-linked (GlcNAc...) asparagine). The chain crosses the membrane as a helical span at residues 22–42 (LILVFVLGALGNGIALCGFCF). At 43–49 (HMKTWKS) the chain is on the cytoplasmic side. A helical membrane pass occupies residues 50–70 (STIYLFNLAVADFLLMICLPL). Over 71-90 (RTDYYLRRRHWIFGDIACRL) the chain is Extracellular. Cys88 and Cys165 are joined by a disulfide. A helical transmembrane segment spans residues 91 to 111 (VLFKLAMNRAGSIVFLTVVAV). Residues 112-131 (DRYFKVVHPHHMVNAISNRT) are Cytoplasmic-facing. A helical membrane pass occupies residues 132–152 (AAATACVLWTLVILGTVYLLM). The Extracellular segment spans residues 153–182 (ESHLCVQGTLSSCESFIMESANGWHDVMFQ). The helical transmembrane segment at 183 to 203 (LEFFLPLTIILFCSVNVVWSL) threads the bilayer. Residues 204–220 (RRRQQLTRQARMRRATR) are Cytoplasmic-facing. A helical membrane pass occupies residues 221–241 (FIMVVASVFITCYLPSVLARL). The Extracellular segment spans residues 242-259 (YFLWTVPTSACDPSVHTA). Residues 260–280 (LHVTLSFTYLNSMLDPLVYYF) traverse the membrane as a helical segment. The Cytoplasmic portion of the chain corresponds to 281-343 (SSPSLPKFYT…SDGQWDLQVC (63 aa)). Positions 319 to 334 (CSKSSIDGANRSQRPS) are enriched in polar residues. Positions 319-343 (CSKSSIDGANRSQRPSDGQWDLQVC) are disordered.

This sequence belongs to the G-protein coupled receptor 1 family. In terms of tissue distribution, highly expressed in subcutaneous fat and omental fat and detectable in lower levels in brain and many other tissues. High levels detected in epididymal and subcutaneous fat with slightly lower in omental fat, low levels are detected in the brain, skeletal muscle, kidney, liver and the pancreas (at protein level).

It is found in the cell membrane. Its function is as follows. Acts as a receptor for L-lactate and mediates its anti-lipolytic effect through a G(i)-protein-mediated pathway. The chain is Hydroxycarboxylic acid receptor 1 (Hcar1) from Mus musculus (Mouse).